Consider the following 727-residue polypeptide: Polyphosphate kinase (727 aa).

Asparagine 82 is an ATP binding site. Arginine 412 and arginine 442 together coordinate Mg(2+). The Phosphohistidine intermediate role is filled by histidine 472. 3 residues coordinate ATP: tyrosine 505, arginine 601, and histidine 629.

This sequence belongs to the polyphosphate kinase 1 (PPK1) family. Mg(2+) serves as cofactor. Post-translationally, an intermediate of this reaction is the autophosphorylated ppk in which a phosphate is covalently linked to a histidine residue through a N-P bond.

It carries out the reaction [phosphate](n) + ATP = [phosphate](n+1) + ADP. Catalyzes the reversible transfer of the terminal phosphate of ATP to form a long-chain polyphosphate (polyP). In Pseudomonas putida (strain ATCC 47054 / DSM 6125 / CFBP 8728 / NCIMB 11950 / KT2440), this protein is Polyphosphate kinase.